The sequence spans 742 residues: Photosystem I P700 chlorophyll a apoprotein A2 (742 aa).

The next 8 helical transmembrane spans lie at 46–69, 135–158, 175–199, 273–291, 336–359, 375–401, 423–445, and 525–543; these read LFSTHFGHLAIIALWVAGNLFHIA, LFQASIFMSILACWTLFAGWLHLQ, LNHHLAVLFGFSSIAWTGHLVHVAI, IAHHHIAIGTVFVIAGHMY, LHFQLGLALASLGVATSLVAQHMG, SALYSHHQYIAMFLMVGAFAHGAIFFV, ALISHLSWVTMLLGFHTLGIYVH, and FLVHHAIALGLHTTALILI. Residues cysteine 567 and cysteine 576 each contribute to the [4Fe-4S] cluster site. 2 helical membrane passes run 583–604 and 651–673; these read AMYLAMFWALNLLAWVTFYWHW and LSPWAWMFLFGHLVWATGFMFLI. Residues histidine 662, methionine 670, and tyrosine 678 each coordinate divinyl chlorophyll a. Residue tryptophan 679 participates in phylloquinone binding. Residues 715–735 form a helical membrane-spanning segment; that stretch reads LVGLAHFTIGNILTFGAFVIA.

The protein belongs to the PsaA/PsaB family. In terms of assembly, the PsaA/B heterodimer binds the P700 divinyl chlorophyll special pair and subsequent electron acceptors. PSI consists of a core antenna complex that captures photons, and an electron transfer chain that converts photonic excitation into a charge separation. The cyanobacterial PSI reaction center is composed of one copy each of PsaA,B,C,D,E,F,I,J,K,L,M and X, and forms trimeric complexes. PSI electron transfer chain: 5 divinyl chlorophyll a, 1 divinyl chlorophyll a', 2 phylloquinones and 3 4Fe-4S clusters. PSI core antenna: 90 divinyl chlorophyll a, 22 carotenoids, 3 phospholipids and 1 galactolipid. P700 is a divinyl chlorophyll a/divinyl chlorophyll a' dimer, A0 is one or more divinyl chlorophyll a, A1 is one or both phylloquinones and FX is a shared 4Fe-4S iron-sulfur center. serves as cofactor.

The protein resides in the cellular thylakoid membrane. The catalysed reaction is reduced [plastocyanin] + hnu + oxidized [2Fe-2S]-[ferredoxin] = oxidized [plastocyanin] + reduced [2Fe-2S]-[ferredoxin]. In terms of biological role, psaA and PsaB bind P700, the primary electron donor of photosystem I (PSI), as well as the electron acceptors A0, A1 and FX. PSI is a plastocyanin/cytochrome c6-ferredoxin oxidoreductase, converting photonic excitation into a charge separation, which transfers an electron from the donor P700 chlorophyll pair to the spectroscopically characterized acceptors A0, A1, FX, FA and FB in turn. Oxidized P700 is reduced on the lumenal side of the thylakoid membrane by plastocyanin or cytochrome c6. This chain is Photosystem I P700 chlorophyll a apoprotein A2, found in Prochlorococcus marinus (strain MIT 9301).